Reading from the N-terminus, the 175-residue chain is uncharacterized protein (175 aa).

2 disordered regions span residues Asn68–Tyr112 and Pro153–Thr175. Residues Asp94–Pro105 are compositionally biased toward low complexity.

Belongs to the asfivirus H171R family.

The protein resides in the virion. This is an uncharacterized protein from African swine fever virus (isolate Tick/Malawi/Lil 20-1/1983) (ASFV).